Reading from the N-terminus, the 837-residue chain is Protein TRANSPARENT TESTA 9 (837 aa).

Residues 42 to 192 (LRSIAEILTY…AVRALTLNVY (151 aa)) form the FPL domain. Positions 366–386 (TEEANQQCSSTAAGMSDDGNS) are disordered. The segment covering 368–378 (EANQQCSSTAA) has biased composition (polar residues).

This sequence belongs to the CLEC16A/gop-1 family.

Its subcellular location is the golgi apparatus membrane. Its function is as follows. Involved in membrane trafficking and vacuole development through membrane fusion at the vacuole. Required for membrane trafficking machinery and accumulation of flavonoids in the seed coat. The sequence is that of Protein TRANSPARENT TESTA 9 from Arabidopsis thaliana (Mouse-ear cress).